We begin with the raw amino-acid sequence, 464 residues long: Rhodopsin (464 aa).

Topologically, residues 1–33 (MGRDIPDNETWWYNPTMEVHPHWKQFNQVPDAV) are extracellular. N-linked (GlcNAc...) asparagine glycosylation is present at asparagine 8. The chain crosses the membrane as a helical span at residues 34 to 58 (YYSLGIFIGICGIIGCTGNGIVIYL). Topologically, residues 59 to 70 (FTKTKSLQTPAN) are cytoplasmic. Residues 71–97 (MFIINLAFSDFTFSLVNGFPLMTISCF) form a helical membrane-spanning segment. The Extracellular portion of the chain corresponds to 98-109 (IKKWVFGMAACK). A disulfide bond links cysteine 108 and cysteine 186. A helical membrane pass occupies residues 110 to 131 (VYGFIGGIFGLMSIMTMSMISI). Positions 132–134 (DRY) match the 'Ionic lock' involved in activated form stabilization motif. The Cytoplasmic portion of the chain corresponds to 132-151 (DRYNVIGRPMAASKKMSHRR). A helical membrane pass occupies residues 152–172 (AFLMIIFVWMWSTLWSIGPIF). The Extracellular segment spans residues 173-199 (GWGAYVLEGVLCNCSFDYITRDSATRS). Residues 200 to 224 (NIVCMYIFAFCFPILIIFFCYFNIV) form a helical membrane-spanning segment. Residues 225–261 (MAVSNHEKEMAAMAKRLNAKELRKAQAGASAEMKLAK) are Cytoplasmic-facing. Residues 262–283 (ISIVIVTQFLLSWSPYAVVALL) traverse the membrane as a helical segment. Residues 284–293 (AQFGPIEWVT) are Extracellular-facing. The chain crosses the membrane as a helical span at residues 294–315 (PYAAQLPVMFAKASAIHNPLIY). Lysine 305 is modified (N6-(retinylidene)lysine). Residues 316 to 464 (SVSHPKFREA…QGVDNQAYQA (149 aa)) lie on the Cytoplasmic side of the membrane. 2 S-palmitoyl cysteine lipidation sites follow: cysteine 336 and cysteine 337. Residues 344-464 (VEDDKDAETE…QGVDNQAYQA (121 aa)) form a disordered region. The span at 367–401 (AAQMKEMMAMMQKMQQQQAAYPPQGAYPPQGGYPP) shows a compositional bias: low complexity. Composition is skewed to pro residues over residues 416-425 (QGYPPPPQGY) and 434-452 (QGYP…PQAA).

Belongs to the G-protein coupled receptor 1 family. Opsin subfamily. In terms of processing, contains one covalently linked retinal chromophore. Upon light absorption, the covalently bound 11-cis-retinal is converted to all-trans-retinal. After hydrolysis of the Schiff base and release of the covalently bound all-trans-retinal, active rhodopsin is regenerated by binding of a fresh molecule of 11-cis-retinal.

It is found in the cell projection. The protein resides in the rhabdomere membrane. In terms of biological role, photoreceptor required for image-forming vision at low light intensity. Light-induced isomerization of 11-cis to all-trans retinal triggers a conformational change that activates signaling via G-proteins. Signaling mediates the activation of phospholipase C. Subsequent receptor phosphorylation mediates displacement of the bound G-protein alpha subunit by arrestin and terminates signaling. This Sepia officinalis (Common cuttlefish) protein is Rhodopsin (RHO).